A 151-amino-acid polypeptide reads, in one-letter code: Differentiation-associated protein 2 (151 aa).

An N-terminal signal peptide occupies residues 1-22 (MKQIIRLITTLLLLSLIGITCA).

Its subcellular location is the endoplasmic reticulum. It is found in the vacuole. Functionally, has an essential role in the initiation of differentiation. Also required for cAMP signaling. The protein is Differentiation-associated protein 2 (dia2) of Dictyostelium discoideum (Social amoeba).